The chain runs to 170 residues: Dual-action ribosomal maturation protein DarP (170 aa).

Belongs to the DarP family.

It is found in the cytoplasm. Functionally, member of a network of 50S ribosomal subunit biogenesis factors which assembles along the 30S-50S interface, preventing incorrect 23S rRNA structures from forming. Promotes peptidyl transferase center (PTC) maturation. The polypeptide is Dual-action ribosomal maturation protein DarP (Neisseria meningitidis serogroup A / serotype 4A (strain DSM 15465 / Z2491)).